We begin with the raw amino-acid sequence, 107 residues long: Large ribosomal subunit protein eL33B (107 aa).

Ala2 carries the N-acetylalanine; partial modification. Lys47 participates in a covalent cross-link: Glycyl lysine isopeptide (Lys-Gly) (interchain with G-Cter in ubiquitin).

The protein belongs to the eukaryotic ribosomal protein eL33 family. Component of the large ribosomal subunit (LSU). Mature yeast ribosomes consist of a small (40S) and a large (60S) subunit. The 40S small subunit contains 1 molecule of ribosomal RNA (18S rRNA) and 33 different proteins (encoded by 57 genes). The large 60S subunit contains 3 rRNA molecules (25S, 5.8S and 5S rRNA) and 46 different proteins (encoded by 81 genes). N-terminally acetylated by acetyltransferase NatA.

It localises to the cytoplasm. Functionally, component of the ribosome, a large ribonucleoprotein complex responsible for the synthesis of proteins in the cell. The small ribosomal subunit (SSU) binds messenger RNAs (mRNAs) and translates the encoded message by selecting cognate aminoacyl-transfer RNA (tRNA) molecules. The large subunit (LSU) contains the ribosomal catalytic site termed the peptidyl transferase center (PTC), which catalyzes the formation of peptide bonds, thereby polymerizing the amino acids delivered by tRNAs into a polypeptide chain. The nascent polypeptides leave the ribosome through a tunnel in the LSU and interact with protein factors that function in enzymatic processing, targeting, and the membrane insertion of nascent chains at the exit of the ribosomal tunnel. The sequence is that of Large ribosomal subunit protein eL33B from Saccharomyces cerevisiae (strain ATCC 204508 / S288c) (Baker's yeast).